The primary structure comprises 140 residues: Nucleoside diphosphate kinase (140 aa).

Residues lysine 11, phenylalanine 59, arginine 87, threonine 93, arginine 104, and asparagine 114 each coordinate ATP. The Pros-phosphohistidine intermediate role is filled by histidine 117.

Belongs to the NDK family. As to quaternary structure, homotetramer. Mg(2+) is required as a cofactor.

It is found in the cytoplasm. It catalyses the reaction a 2'-deoxyribonucleoside 5'-diphosphate + ATP = a 2'-deoxyribonucleoside 5'-triphosphate + ADP. The catalysed reaction is a ribonucleoside 5'-diphosphate + ATP = a ribonucleoside 5'-triphosphate + ADP. Its function is as follows. Major role in the synthesis of nucleoside triphosphates other than ATP. The ATP gamma phosphate is transferred to the NDP beta phosphate via a ping-pong mechanism, using a phosphorylated active-site intermediate. The sequence is that of Nucleoside diphosphate kinase from Rhodopseudomonas palustris (strain BisB18).